The chain runs to 212 residues: RNA chaperone ProQ (212 aa).

A disordered region spans residues 107–153; it reads QDKAKAKRVAQAKSANPAAKTAKKPVKKPVAKRPKPAQSSKPAKEPV. A compositionally biased stretch (low complexity) spans 117 to 126; the sequence is QAKSANPAAK. The segment covering 127-141 has biased composition (basic residues); it reads TAKKPVKKPVAKRPK.

It belongs to the ProQ family.

It is found in the cytoplasm. In terms of biological role, RNA chaperone with significant RNA binding, RNA strand exchange and RNA duplexing activities. This chain is RNA chaperone ProQ, found in Shewanella pealeana (strain ATCC 700345 / ANG-SQ1).